The chain runs to 184 residues: Ribosome-recycling factor (184 aa).

This sequence belongs to the RRF family.

The protein localises to the cytoplasm. Functionally, responsible for the release of ribosomes from messenger RNA at the termination of protein biosynthesis. May increase the efficiency of translation by recycling ribosomes from one round of translation to another. The protein is Ribosome-recycling factor of Clostridium botulinum (strain Okra / Type B1).